A 169-amino-acid polypeptide reads, in one-letter code: MSRAAVAIALLGCVVAAYGAPAEGHDDAKAEWTGKSWMGKWESTDRIENFDAFISALGLPLEQYGGNHKTFHKIWKEGDHYHHQISVPDKNYKNDVNFKLNEEGTTQHNNTEIKYKYTEDGGNLKAEVHVPSRNKVIHDEYKVNGDELEKTYKVGDVTAKRWYKKSSSS.

The N-terminal stretch at 1 to 19 (MSRAAVAIALLGCVVAAYG) is a signal peptide. The interval 31-60 (EWTGKSWMGKWESTDRIENFDAFISALGLP) is SAHS-c1. The segment at 75–103 (WKEGDHYHHQISVPDKNYKNDVNFKLNEE) is SAHS-c2. Asparagine 109 carries an N-linked (GlcNAc...) asparagine glycan. The segment at 116–165 (KYTEDGGNLKAEVHVPSRNKVIHDEYKVNGDELEKTYKVGDVTAKRWYKK) is SAHS-c3.

This sequence belongs to the Secretory-abundant heat soluble protein (SAHS) family.

The protein localises to the secreted. In terms of biological role, secreted heat soluble protein acting as a molecular shield in water-deficient condition. Tardigrade-specific intrinsically disordered proteins (TDPs) are essential for desiccation tolerance by forming non-crystalline amorphous solids upon desiccation, and this vitrified state mirrors their protective capabilities. The chain is Secretory-abundant heat soluble protein 1 from Ramazzottius varieornatus (Water bear).